A 208-amino-acid polypeptide reads, in one-letter code: Mediator of RNA polymerase II transcription subunit 18 (208 aa).

This sequence belongs to the Mediator complex subunit 18 family. In terms of assembly, component of the Mediator complex.

It is found in the nucleus. Its function is as follows. Component of the Mediator complex, a coactivator involved in the regulated transcription of nearly all RNA polymerase II-dependent genes. Mediator functions as a bridge to convey information from gene-specific regulatory proteins to the basal RNA polymerase II transcription machinery. Mediator is recruited to promoters by direct interactions with regulatory proteins and serves as a scaffold for the assembly of a functional preinitiation complex with RNA polymerase II and the general transcription factors. This chain is Mediator of RNA polymerase II transcription subunit 18 (med18), found in Xenopus tropicalis (Western clawed frog).